The sequence spans 498 residues: GTPase Der (498 aa).

EngA-type G domains are found at residues 3–167 (PVVA…FDDL) and 210–383 (IKLA…KSAT). Residues 9–16 (GRPNVGKS), 57–61 (DTGGI), 119–122 (NKID), 216–223 (GRPNVGKS), 263–267 (DTAGV), and 328–331 (NKWD) contribute to the GTP site. The KH-like domain maps to 384-468 (TRVGTSVLTR…PIRINFQNSE (85 aa)).

Belongs to the TRAFAC class TrmE-Era-EngA-EngB-Septin-like GTPase superfamily. EngA (Der) GTPase family. As to quaternary structure, associates with the 50S ribosomal subunit.

GTPase that plays an essential role in the late steps of ribosome biogenesis. In Vibrio parahaemolyticus serotype O3:K6 (strain RIMD 2210633), this protein is GTPase Der.